The sequence spans 166 residues: 2-C-methyl-D-erythritol 2,4-cyclodiphosphate synthase (166 aa).

Residues Asp12 and His14 each coordinate a divalent metal cation. 4-CDP-2-C-methyl-D-erythritol 2-phosphate is bound by residues 12–14 (DVH) and 38–39 (HS). His46 is an a divalent metal cation binding site. Residues 60–62 (DIG), 136–139 (TTSE), Phe143, and Arg146 each bind 4-CDP-2-C-methyl-D-erythritol 2-phosphate.

This sequence belongs to the IspF family. Homotrimer. A divalent metal cation is required as a cofactor.

It carries out the reaction 4-CDP-2-C-methyl-D-erythritol 2-phosphate = 2-C-methyl-D-erythritol 2,4-cyclic diphosphate + CMP. Its pathway is isoprenoid biosynthesis; isopentenyl diphosphate biosynthesis via DXP pathway; isopentenyl diphosphate from 1-deoxy-D-xylulose 5-phosphate: step 4/6. Involved in the biosynthesis of isopentenyl diphosphate (IPP) and dimethylallyl diphosphate (DMAPP), two major building blocks of isoprenoid compounds. Catalyzes the conversion of 4-diphosphocytidyl-2-C-methyl-D-erythritol 2-phosphate (CDP-ME2P) to 2-C-methyl-D-erythritol 2,4-cyclodiphosphate (ME-CPP) with a corresponding release of cytidine 5-monophosphate (CMP). This Xanthomonas axonopodis pv. citri (strain 306) protein is 2-C-methyl-D-erythritol 2,4-cyclodiphosphate synthase.